Consider the following 104-residue polypeptide: Small ribosomal subunit protein uS10 (104 aa).

The protein belongs to the universal ribosomal protein uS10 family. As to quaternary structure, part of the 30S ribosomal subunit.

Functionally, involved in the binding of tRNA to the ribosomes. This is Small ribosomal subunit protein uS10 from Ralstonia nicotianae (strain ATCC BAA-1114 / GMI1000) (Ralstonia solanacearum).